The chain runs to 544 residues: GMP synthase [glutamine-hydrolyzing] (544 aa).

A Glutamine amidotransferase type-1 domain is found at 12–210 (TILILDFGSQ…VKNVCSVRDG (199 aa)). The active-site Nucleophile is Cys88. Catalysis depends on residues His184 and Glu186. One can recognise a GMPS ATP-PPase domain in the interval 211 to 419 (WSMESFIPKE…LNIPEHLVGR (209 aa)). ATP is bound at residue 239 to 245 (SGGVDST). 4 residues coordinate XMP: Arg312, Asp481, Lys536, and Glu542.

Homodimer. Also forms a small population of homotetramers. Requires Mg(2+) as cofactor.

It is found in the cytoplasm. The protein localises to the cytosol. The enzyme catalyses XMP + L-glutamine + ATP + H2O = GMP + L-glutamate + AMP + diphosphate + 2 H(+). The protein operates within purine metabolism; GMP biosynthesis; GMP from XMP (L-Gln route): step 1/1. In terms of biological role, catalyzes the conversion of xanthine monophosphate (XMP) to GMP in the presence of glutamine and ATP through an adenyl-XMP intermediate. In Cryptococcus neoformans var. neoformans serotype D (strain JEC21 / ATCC MYA-565) (Filobasidiella neoformans), this protein is GMP synthase [glutamine-hydrolyzing].